The following is a 382-amino-acid chain: Prophage ps2 probable integrase (382 aa).

A Core-binding (CB) domain is found at 63–142; the sequence is AKFTDIAEEW…TLNLIFDYAV (80 aa). In terms of domain architecture, Tyr recombinase spans 170–376; the sequence is IQNKYLEQNE…TENMKSSIID (207 aa). Catalysis depends on residues Arg-209, Lys-242, His-326, Arg-329, and His-352. Catalysis depends on Tyr-363, which acts as the O-(3'-phospho-DNA)-tyrosine intermediate.

The protein belongs to the 'phage' integrase family.

The polypeptide is Prophage ps2 probable integrase (ps201) (Lactococcus lactis subsp. lactis (strain IL1403) (Streptococcus lactis)).